A 240-amino-acid polypeptide reads, in one-letter code: UDP-2,3-diacylglucosamine hydrolase (240 aa).

Aspartate 8, histidine 10, aspartate 41, asparagine 79, and histidine 114 together coordinate Mn(2+). Asparagine 79–arginine 80 is a binding site for substrate. Positions 122, 160, 164, 167, and 195 each coordinate substrate. 2 residues coordinate Mn(2+): histidine 195 and histidine 197.

It belongs to the LpxH family. Mn(2+) serves as cofactor.

The protein resides in the cell inner membrane. It carries out the reaction UDP-2-N,3-O-bis[(3R)-3-hydroxytetradecanoyl]-alpha-D-glucosamine + H2O = 2-N,3-O-bis[(3R)-3-hydroxytetradecanoyl]-alpha-D-glucosaminyl 1-phosphate + UMP + 2 H(+). It participates in glycolipid biosynthesis; lipid IV(A) biosynthesis; lipid IV(A) from (3R)-3-hydroxytetradecanoyl-[acyl-carrier-protein] and UDP-N-acetyl-alpha-D-glucosamine: step 4/6. In terms of biological role, hydrolyzes the pyrophosphate bond of UDP-2,3-diacylglucosamine to yield 2,3-diacylglucosamine 1-phosphate (lipid X) and UMP by catalyzing the attack of water at the alpha-P atom. Involved in the biosynthesis of lipid A, a phosphorylated glycolipid that anchors the lipopolysaccharide to the outer membrane of the cell. The chain is UDP-2,3-diacylglucosamine hydrolase from Escherichia coli O157:H7.